The primary structure comprises 392 residues: Phosphoglycerate kinase (392 aa).

Substrate contacts are provided by residues 26 to 28 (DLN), Arg41, 64 to 67 (HLGR), Arg118, and Arg151. Residues Lys202, Glu319, and 345–348 (GGDT) contribute to the ATP site.

Belongs to the phosphoglycerate kinase family. In terms of assembly, monomer.

It localises to the cytoplasm. It catalyses the reaction (2R)-3-phosphoglycerate + ATP = (2R)-3-phospho-glyceroyl phosphate + ADP. It functions in the pathway carbohydrate degradation; glycolysis; pyruvate from D-glyceraldehyde 3-phosphate: step 2/5. In Photobacterium profundum (strain SS9), this protein is Phosphoglycerate kinase.